We begin with the raw amino-acid sequence, 252 residues long: 3-dehydroquinate dehydratase (252 aa).

3-dehydroquinate contacts are provided by residues serine 21, 46 to 48 (EWR), and arginine 82. The Proton donor/acceptor role is filled by histidine 143. The active-site Schiff-base intermediate with substrate is the lysine 170. Residues arginine 213, serine 232, and glutamine 236 each contribute to the 3-dehydroquinate site.

It belongs to the type-I 3-dehydroquinase family. In terms of assembly, homodimer.

The enzyme catalyses 3-dehydroquinate = 3-dehydroshikimate + H2O. The protein operates within metabolic intermediate biosynthesis; chorismate biosynthesis; chorismate from D-erythrose 4-phosphate and phosphoenolpyruvate: step 3/7. In terms of biological role, involved in the third step of the chorismate pathway, which leads to the biosynthesis of aromatic amino acids. Catalyzes the cis-dehydration of 3-dehydroquinate (DHQ) and introduces the first double bond of the aromatic ring to yield 3-dehydroshikimate. In Escherichia coli (strain 55989 / EAEC), this protein is 3-dehydroquinate dehydratase.